The following is a 473-amino-acid chain: Sulfhydrylase-like protein lolC2 (473 aa).

Lysine 226 bears the N6-(pyridoxal phosphate)lysine mark.

This sequence belongs to the trans-sulfuration enzymes family. Requires pyridoxal 5'-phosphate as cofactor.

Its pathway is alkaloid biosynthesis. Sulfhydrylase-like protein; part of the gene cluster that mediates the biosynthesis of loline alkaloids, potent insecticidal agents composed of a pyrrolizidine ring system and an uncommon ether bridge linking carbons 2 and 7. Lolines are structurally differentiated by the various modifications of the L-amino group and include norloline, loline, N-methylloline, N-acetylloline, N-acetylnorloline, and N-formylloline. The first committed step is the condensation of O-acetyl-L-homoserine (derived from L-aspartic acid) and L-proline, probably catalyzed by the gamma-type pyridoxal 5'-phosphate(PLP)-dependent enzyme lolC, to give the diamino diacid, NACPP. Ensuing cyclization, decarboxylation, and acetylation steps yield 1-exo-acetamidopyrrolizidine (AcAP). LolO is required for installation of the ether bridge upon the pathway intermediate, 1-exo-acetamidopyrrolizidine (AcAP). In sequential 2-oxoglutarate- and O(2)-consuming steps, lolO removes hydrogens from C2 and C7 of AcAP to form both carbon-oxygen bonds in N-acetylnorloline (NANL), the precursor to all other lolines. The enzymes lolD, lolE, lolF and lolT have also been proposed to be involved in the ether-bridge installation. Further processing of the exocyclic moiety of NANL by fungal N-acetamidase (LolN), methyltransferase (LolM), and cytochrome P450 (LolP) enzymes, with occasional involvement of a plant acetyltransferase, generates the other known lolines. LolN transforms NANL to norlonine which is monomethylated and dimethylated to respectively lonine and N-methyllonine (NML) by lolM. LolP catalyzes hydroxylation of the methyl group in N-methylloline (NML) and further oxygenation to N-formylloline (NFL). A plant acetyltransferase is responsible for the acetylation of loline to form N-acetylloline (NAL). LolA might interact with aspartate kinase to prevent feedback inhibition of its activity by these end products and thereby promote production of L-homoserine from L-aspartate. In Epichloe uncinata (Endophyte fungus), this protein is Sulfhydrylase-like protein lolC2.